Reading from the N-terminus, the 403-residue chain is Nodal homolog (403 aa).

Positions 1-18 are cleaved as a signal peptide; that stretch reads MAFLTAVLCFGFACMVQG. Residues 19 to 278 constitute a propeptide that is removed on maturation; the sequence is VPSWLESRIP…RMPGIRRHRR (260 aa). N-linked (GlcNAc...) asparagine glycans are attached at residues N68, N133, and N169. Positions 195–220 are disordered; that stretch reads AERGSGMSSAEFLDSPGDSPQYNPHH. 3 disulfides stabilise this stretch: C303–C369, C332–C400, and C336–C402. The N-linked (GlcNAc...) asparagine glycan is linked to N341.

This sequence belongs to the TGF-beta family. As to quaternary structure, homodimer; disulfide-linked. Interacts with, and is inhibited by cer1 and gdf10/bmp3b.

The protein localises to the secreted. Cooperation and regulatory loops of multiple nodals are essential for mesendoderm patterning in early embryos. Essential for mesoderm formation and axial patterning during embryonic development. Activates the activin-like signaling pathway to induce dorsal and ventral mesoderm in animal cap ectoderm. In addition, also dorsalizes ventral marginal zone (VMZ) tissues during gastrulation. Acts in a downstream signaling cascade via cripto and cer1 to mediate cardiogenesis in embryonic mesoderm. Directs the orientation of the left-right axis by driving the left-specific gene cascade in the left lateral plate mesoderm. The protein is Nodal homolog of Xenopus tropicalis (Western clawed frog).